Reading from the N-terminus, the 207-residue chain is Large ribosomal subunit protein uL4 (207 aa).

The disordered stretch occupies residues 53 to 76; it reads TVSEVSGTTKKPFKQKGTGNARQG.

This sequence belongs to the universal ribosomal protein uL4 family. In terms of assembly, part of the 50S ribosomal subunit.

Functionally, one of the primary rRNA binding proteins, this protein initially binds near the 5'-end of the 23S rRNA. It is important during the early stages of 50S assembly. It makes multiple contacts with different domains of the 23S rRNA in the assembled 50S subunit and ribosome. Its function is as follows. Forms part of the polypeptide exit tunnel. This Rickettsia bellii (strain OSU 85-389) protein is Large ribosomal subunit protein uL4.